Here is a 189-residue protein sequence, read N- to C-terminus: Casparian strip membrane protein 1 (189 aa).

At 1-42 (MEKNESSAIEIAESSKERKGKAPLLAAAVGHDRAAGYKRGVS) the chain is on the cytoplasmic side. A helical membrane pass occupies residues 43–63 (IFDLILRISAATAALAATIVM). The Extracellular segment spans residues 64-90 (GTTEQTLPFFTQFFQFRAQYDDLPTFT). A helical membrane pass occupies residues 91–111 (FFVVGMAIVTGYLILSVPLSI). Topologically, residues 112–130 (VCIARPVAIGPRFLLIVCD) are cytoplasmic. Residues 131 to 151 (TVTAVLATSAAGSSAAIVYLA) traverse the membrane as a helical segment. The Extracellular segment spans residues 152–189 (HNGNSDANWLAICQQFNDFCQRVSGAVVAAFVAVVCSS).

It belongs to the Casparian strip membrane proteins (CASP) family. Homodimer and heterodimers.

The protein localises to the cell membrane. Its function is as follows. Regulates membrane-cell wall junctions and localized cell wall deposition. Required for establishment of the Casparian strip membrane domain (CSD) and the subsequent formation of Casparian strips, a cell wall modification of the root endodermis that determines an apoplastic barrier between the intraorganismal apoplasm and the extraorganismal apoplasm and prevents lateral diffusion. This Striga asiatica (Asiatic witchweed) protein is Casparian strip membrane protein 1.